The primary structure comprises 486 residues: Glycogen synthase (486 aa).

Lys15 provides a ligand contact to ADP-alpha-D-glucose.

It belongs to the glycosyltransferase 1 family. Bacterial/plant glycogen synthase subfamily.

It catalyses the reaction [(1-&gt;4)-alpha-D-glucosyl](n) + ADP-alpha-D-glucose = [(1-&gt;4)-alpha-D-glucosyl](n+1) + ADP + H(+). Its pathway is glycan biosynthesis; glycogen biosynthesis. Functionally, synthesizes alpha-1,4-glucan chains using ADP-glucose. The polypeptide is Glycogen synthase (Thermotoga maritima (strain ATCC 43589 / DSM 3109 / JCM 10099 / NBRC 100826 / MSB8)).